The primary structure comprises 73 residues: Ferredoxin-thioredoxin reductase, variable chain (73 aa).

Residues 43–46 (NGKP) form an interaction with ferredoxin region.

Belongs to the ferredoxin thioredoxin reductase alpha subunit family. Heterodimer of subunit A (variable subunit) and subunit B (catalytic subunit). Heterodimeric FTR forms a complex with ferredoxin and thioredoxin.

In terms of biological role, variable subunit of the ferredoxin-thioredoxin reductase (FTR), which catalyzes the two-electron reduction of thioredoxins by the electrons provided by reduced ferredoxin. In Synechococcus sp. (strain ATCC 27144 / PCC 6301 / SAUG 1402/1) (Anacystis nidulans), this protein is Ferredoxin-thioredoxin reductase, variable chain (ftrV).